The primary structure comprises 592 residues: Aspartate--tRNA ligase (592 aa).

Position 173 (E173) interacts with L-aspartate. Residues 197–200 are aspartate; it reads QLFK. R219 lines the L-aspartate pocket. ATP contacts are provided by residues 219–221 and Q228; that span reads RDE. H448 lines the L-aspartate pocket. E482 serves as a coordination point for ATP. An L-aspartate-binding site is contributed by R489. Position 534 to 537 (534 to 537) interacts with ATP; that stretch reads GLDR.

It belongs to the class-II aminoacyl-tRNA synthetase family. Type 1 subfamily. In terms of assembly, homodimer.

The protein resides in the cytoplasm. It catalyses the reaction tRNA(Asp) + L-aspartate + ATP = L-aspartyl-tRNA(Asp) + AMP + diphosphate. Catalyzes the attachment of L-aspartate to tRNA(Asp) in a two-step reaction: L-aspartate is first activated by ATP to form Asp-AMP and then transferred to the acceptor end of tRNA(Asp). The sequence is that of Aspartate--tRNA ligase from Shewanella baltica (strain OS195).